Here is a 436-residue protein sequence, read N- to C-terminus: Exodeoxyribonuclease 7 large subunit (436 aa).

The tract at residues 412–436 (PGGVMNKNSNTTDSTDNTENGTGEA) is disordered. Residues 417-436 (NKNSNTTDSTDNTENGTGEA) show a composition bias toward low complexity.

This sequence belongs to the XseA family. Heterooligomer composed of large and small subunits.

The protein resides in the cytoplasm. The enzyme catalyses Exonucleolytic cleavage in either 5'- to 3'- or 3'- to 5'-direction to yield nucleoside 5'-phosphates.. In terms of biological role, bidirectionally degrades single-stranded DNA into large acid-insoluble oligonucleotides, which are then degraded further into small acid-soluble oligonucleotides. The sequence is that of Exodeoxyribonuclease 7 large subunit from Corynebacterium jeikeium (strain K411).